We begin with the raw amino-acid sequence, 618 residues long: Leucine aminopeptidase 2 (618 aa).

A peptide-binding positions include Q139–Q141 and P271–E276. H300 is a Zn(2+) binding site. The active-site Proton acceptor is the E301. Zn(2+)-binding residues include H304 and E323. Catalysis depends on Y389, which acts as the Proton donor.

The protein belongs to the peptidase M1 family. Requires Zn(2+) as cofactor.

The protein resides in the cytoplasm. Its subcellular location is the nucleus. It catalyses the reaction an epoxide + H2O = an ethanediol. Aminopeptidase that preferentially cleaves di- and tripeptides. Also has low epoxide hydrolase activity (in vitro). Can hydrolyze the epoxide leukotriene LTA(4) but it forms preferentially 5,6-dihydroxy-7,9,11,14-eicosatetraenoic acid rather than the cytokine leukotriene B(4) as the product compared to the homologous mammalian enzyme (in vitro). The chain is Leucine aminopeptidase 2 from Aspergillus clavatus (strain ATCC 1007 / CBS 513.65 / DSM 816 / NCTC 3887 / NRRL 1 / QM 1276 / 107).